Reading from the N-terminus, the 155-residue chain is MQLNLVCVGERMPSWVNEGYEEYARRLPRECALMLREIAPGKRTRNCDIQRILADEGQRMLAAVGGNAHIVTLDVGGKDWSTRELAEVLARWLREGRDIALLVGGPDGLSDACRQRAAESWSLSRMTFPHPLVRVIVAEQLYRAWTLLNNHPYHR.

S-adenosyl-L-methionine contacts are provided by residues L73, G104, and 123–128 (LSRMTF).

It belongs to the RNA methyltransferase RlmH family. Homodimer.

The protein localises to the cytoplasm. The enzyme catalyses pseudouridine(1915) in 23S rRNA + S-adenosyl-L-methionine = N(3)-methylpseudouridine(1915) in 23S rRNA + S-adenosyl-L-homocysteine + H(+). Specifically methylates the pseudouridine at position 1915 (m3Psi1915) in 23S rRNA. The chain is Ribosomal RNA large subunit methyltransferase H from Methylococcus capsulatus (strain ATCC 33009 / NCIMB 11132 / Bath).